We begin with the raw amino-acid sequence, 602 residues long: Myotubularin (602 aa).

Residues 1 to 16 are compositionally biased toward polar residues; that stretch reads MATSSTPKYNSNSLEN. Residues 1-33 form a disordered region; that stretch reads MATSSTPKYNSNSLENSVRRSPGDGINHEQNDE. Residues 17–33 show a composition bias toward basic and acidic residues; it reads SVRRSPGDGINHEQNDE. One can recognise a GRAM domain in the interval 28–96; that stretch reads HEQNDEISRL…GVIARIEKMG (69 aa). Residues 162–537 enclose the Myotubularin phosphatase domain; it reads GWAVYDAMTE…RHLELWVNYY (376 aa). Residues N287, N312, and I313 each contribute to the a 1,2-diacyl-sn-glycero-3-phospho-(1D-myo-inositol-3,5-bisphosphate) site. Residues N287, N312, and I313 each coordinate a 1,2-diacyl-sn-glycero-3-phospho-(1D-myo-inositol-3-phosphate). C374 serves as the catalytic Phosphocysteine intermediate. Residues S375, D376, G377, W378, D379, R380, K416, and R420 each coordinate a 1,2-diacyl-sn-glycero-3-phospho-(1D-myo-inositol-3,5-bisphosphate). Residues S375, D376, G377, W378, D379, and R380 each contribute to the a 1,2-diacyl-sn-glycero-3-phospho-(1D-myo-inositol-3-phosphate) site. R420 contributes to the a 1,2-diacyl-sn-glycero-3-phospho-(1D-myo-inositol-3-phosphate) binding site. The disordered stretch occupies residues 577 to 602; that stretch reads NSPKINRSTTSPSSPSQMMPQVQTPF. The span at 584–602 shows a compositional bias: low complexity; sequence STTSPSSPSQMMPQVQTPF.

It belongs to the protein-tyrosine phosphatase family. Non-receptor class myotubularin subfamily.

The protein resides in the cytoplasm. It localises to the cell membrane. Its subcellular location is the cell projection. It is found in the filopodium. The protein localises to the ruffle. The protein resides in the late endosome. It localises to the myofibril. Its subcellular location is the sarcomere. The catalysed reaction is a 1,2-diacyl-sn-glycero-3-phospho-(1D-myo-inositol-3-phosphate) + H2O = a 1,2-diacyl-sn-glycero-3-phospho-(1D-myo-inositol) + phosphate. The enzyme catalyses a 1,2-diacyl-sn-glycero-3-phospho-(1D-myo-inositol-3,5-bisphosphate) + H2O = a 1,2-diacyl-sn-glycero-3-phospho-(1D-myo-inositol-5-phosphate) + phosphate. It catalyses the reaction 1,2-dioctanoyl-sn-glycero-3-phospho-(1-D-myo-inositol-3-phosphate) + H2O = 1,2-dioctanoyl-sn-glycero-3-phospho-(1D-myo-inositol) + phosphate. It carries out the reaction 1,2-dioctanoyl-sn-glycero-3-phospho-(1D-myo-inositol-3,5-bisphosphate) + H2O = 1,2-dioctanoyl-sn-glycero-3-phospho-(1D-myo-inositol-5-phosphate) + phosphate. The catalysed reaction is 1,2-dihexadecanoyl-sn-glycero-3-phospho-(1D-myo-inositol-3,5-phosphate) + H2O = 1,2-dihexadecanoyl-sn-glycero-3-phospho-(1D-myo-inositol-5-phosphate) + phosphate. In terms of biological role, lipid phosphatase which dephosphorylates phosphatidylinositol 3-monophosphate (PI3P) and phosphatidylinositol 3,5-bisphosphate (PI(3,5)P2). This Xenopus laevis (African clawed frog) protein is Myotubularin (mtm1).